The sequence spans 295 residues: Protein NEOXANTHIN-DEFICIENT 1 (295 aa).

Residues 221–251 form a disordered region; sequence PAKVSGPSESDADKENSSEDQSSNVESVSRV.

Its function is as follows. Required for neoxanthin biosynthesis. Probably not involved directly in the enzymatic conversion of violaxanthin to neoxanthin. Is necessary but not sufficient for neoxanthin synthesis. Seems not required for abscisic acid (ABA) biosynthesis in response to drought stress. The polypeptide is Protein NEOXANTHIN-DEFICIENT 1 (Solanum lycopersicum (Tomato)).